We begin with the raw amino-acid sequence, 1420 residues long: DNA-directed RNA polymerase subunit beta' (1420 aa).

Zn(2+) contacts are provided by Cys70, Cys72, Cys85, and Cys88. Asp464, Asp466, and Asp468 together coordinate Mg(2+). Zn(2+)-binding residues include Cys823, Cys897, Cys904, and Cys907.

This sequence belongs to the RNA polymerase beta' chain family. The RNAP catalytic core consists of 2 alpha, 1 beta, 1 beta' and 1 omega subunit. When a sigma factor is associated with the core the holoenzyme is formed, which can initiate transcription. Mg(2+) is required as a cofactor. The cofactor is Zn(2+).

The enzyme catalyses RNA(n) + a ribonucleoside 5'-triphosphate = RNA(n+1) + diphosphate. Functionally, DNA-dependent RNA polymerase catalyzes the transcription of DNA into RNA using the four ribonucleoside triphosphates as substrates. The protein is DNA-directed RNA polymerase subunit beta' of Polynucleobacter necessarius subsp. necessarius (strain STIR1).